We begin with the raw amino-acid sequence, 229 residues long: Large ribosomal subunit protein uL1 (229 aa).

This sequence belongs to the universal ribosomal protein uL1 family. In terms of assembly, part of the 50S ribosomal subunit.

Functionally, binds directly to 23S rRNA. The L1 stalk is quite mobile in the ribosome, and is involved in E site tRNA release. In terms of biological role, protein L1 is also a translational repressor protein, it controls the translation of the L11 operon by binding to its mRNA. This chain is Large ribosomal subunit protein uL1, found in Enterococcus faecalis (strain ATCC 700802 / V583).